Here is a 2388-residue protein sequence, read N- to C-terminus: Highly reducing polyketide synthase Preu1 (2388 aa).

One can recognise a Ketosynthase family 3 (KS3) domain in the interval Asn-7 to Asp-432. Active-site for beta-ketoacyl synthase activity residues include Cys-180, His-315, and His-355. The segment at Gly-549–Gly-875 is malonyl-CoA:ACP transacylase (MAT) domain. Ser-641 acts as the For malonyltransferase activity in catalysis. Residues His-940–Glu-1074 form an N-terminal hotdog fold region. The PKS/mFAS DH domain maps to His-940–Gln-1256. The dehydratase (DH) domain stretch occupies residues Asp-941 to Pro-1251. His-972 acts as the Proton acceptor; for dehydratase activity in catalysis. The tract at residues Thr-1102 to Gln-1256 is C-terminal hotdog fold. The active-site Proton donor; for dehydratase activity is the Asp-1167. The segment at Lys-1676–Leu-1983 is enoyl reductase (ER) domain. The ketoreductase (KR) domain stretch occupies residues Ala-2007–Met-2191. A Carrier domain is found at Gln-2303–Ser-2380. Residue Ser-2340 is modified to O-(pantetheine 4'-phosphoryl)serine.

Pantetheine 4'-phosphate is required as a cofactor.

Functionally, highly reducing polyketide synthase; part of a gene cluster that mediates the biosynthesis of a yet unidentified natural product. This Preussia isomera (Coprophilous fungus) protein is Highly reducing polyketide synthase Preu1.